Reading from the N-terminus, the 391-residue chain is UPF0229 protein CA_C0580 (391 aa).

Disordered stretches follow at residues Met-1–Asp-20 and Val-75–Gly-109. Positions Gly-96–Asn-106 are enriched in gly residues.

The protein belongs to the UPF0229 family.

This is UPF0229 protein CA_C0580 from Clostridium acetobutylicum (strain ATCC 824 / DSM 792 / JCM 1419 / IAM 19013 / LMG 5710 / NBRC 13948 / NRRL B-527 / VKM B-1787 / 2291 / W).